The following is a 524-amino-acid chain: MSAILKQRVRYAPYLKKLRTGEQCIDLFKHGQYLGWSGFTGVGAPKVIPTTLVDHVEKNNLQGKLGFHLFVGASAGPEESRWAENNMILTRAPHQVGKPIAAAINDGRTQFFDKHLSMFPQDLTYGFYTKDKPNGSNLDYTIIEATAITEDGSIVPGPAVGASPEMISVSDKIIIEVNTKTPSFEGIHDIDMPVNPPFRQPYPHTSADFKIGKTAIPVDPEKVVAIVESTSGDKVPPNTPSDEQSRGIANHLIEFLEHEVKQGRLPANLHPLQSGIGNIANAVVEGLASSNFKNLTVWTEVLQDSFLDFFESGSLDYATATSIRLTNDGFKKFYDNWDTYSKKLCLRSQVVSNSPEIIRRLGVIAMNTPVEVDIYGHANSTNVMGSRMLNGLGGSADFLRNAKLSIMHTPSARPSKVDPTGLSCIVPMASHVDQTEHDLDVVVTEQGLADLRGLAPKARAKVIIDKCSHPDYKPQLQEYYDRSVFYATKKKTLHEPHILRDVFKMHLNFQENGTMKLDSWDQKF.

275–279 (GIGNI) serves as a coordination point for CoA. Glu-300 functions as the 5-glutamyl coenzyme A thioester intermediate in the catalytic mechanism. CoA is bound by residues Asn-390 and Gly-394.

It belongs to the acetyl-CoA hydrolase/transferase family.

It localises to the cytoplasm. The catalysed reaction is acetyl-CoA + H2O = acetate + CoA + H(+). Functionally, presumably involved in regulating the intracellular acetyl-CoA pool for fatty acid and cholesterol synthesis and fatty acid oxidation. The polypeptide is Acetyl-CoA hydrolase (ACH1) (Candida albicans (strain SC5314 / ATCC MYA-2876) (Yeast)).